A 336-amino-acid chain; its full sequence is D-aspartate oxidase (336 aa).

7 residues coordinate FAD: glutamate 34, lysine 35, threonine 41, serine 42, glycine 304, valine 308, and serine 309. The Microbody targeting signal signature appears at 334-336; the sequence is SKL.

This sequence belongs to the DAMOX/DASOX family. As to quaternary structure, monomer. FAD is required as a cofactor.

The protein localises to the peroxisome matrix. It catalyses the reaction D-aspartate + O2 + H2O = oxaloacetate + H2O2 + NH4(+). It carries out the reaction D-glutamate + O2 + H2O = H2O2 + 2-oxoglutarate + NH4(+). In terms of biological role, selectively catalyzes the oxidative deamination of acidic amino acids. Suppresses the level of D-aspartate in the brain, an amino acid that can act as an agonist for glutamate receptors. Protects the organism from the toxicity of D-amino acids. May also function in the intestine. This Octopus vulgaris (Common octopus) protein is D-aspartate oxidase.